The chain runs to 305 residues: Glycerol-3-phosphate dehydrogenase [NAD(P)+] (305 aa).

3 residues coordinate NADPH: F10, R29, and K87. Sn-glycerol 3-phosphate is bound by residues K87, G115, and S117. A119 contributes to the NADPH binding site. Residues K170, D223, S233, R234, and N235 each contribute to the sn-glycerol 3-phosphate site. Catalysis depends on K170, which acts as the Proton acceptor. R234 contacts NADPH. An NADPH-binding site is contributed by E255.

It belongs to the NAD-dependent glycerol-3-phosphate dehydrogenase family.

It localises to the cytoplasm. It carries out the reaction sn-glycerol 3-phosphate + NAD(+) = dihydroxyacetone phosphate + NADH + H(+). The enzyme catalyses sn-glycerol 3-phosphate + NADP(+) = dihydroxyacetone phosphate + NADPH + H(+). The protein operates within membrane lipid metabolism; glycerophospholipid metabolism. Its function is as follows. Catalyzes the reduction of the glycolytic intermediate dihydroxyacetone phosphate (DHAP) to sn-glycerol 3-phosphate (G3P), the key precursor for phospholipid synthesis. The protein is Glycerol-3-phosphate dehydrogenase [NAD(P)+] of Cereibacter sphaeroides (strain ATCC 17023 / DSM 158 / JCM 6121 / CCUG 31486 / LMG 2827 / NBRC 12203 / NCIMB 8253 / ATH 2.4.1.) (Rhodobacter sphaeroides).